The following is a 566-amino-acid chain: Membrane protein insertase YidC (566 aa).

A helical transmembrane segment spans residues 6–26 (NLLLLALLFVSFLLYTAWVEE). Residues 30-80 (QVAPQVQTEQVDSSVPASVASSANSANLSDGVPNSPQQSSTDATSTELPAS) are disordered. The segment covering 31 to 41 (VAPQVQTEQVD) has biased composition (polar residues). Residues 42–58 (SSVPASVASSANSANLS) show a composition bias toward low complexity. Residues 61–80 (VPNSPQQSSTDATSTELPAS) are compositionally biased toward polar residues. 4 helical membrane-spanning segments follow: residues 356–376 (LLLF…LITF), 433–453 (LGGC…YWSL), 471–491 (LSVQ…MFFI), and 510–530 (FMPV…VLYW).

It belongs to the OXA1/ALB3/YidC family. Type 1 subfamily. Interacts with the Sec translocase complex via SecD. Specifically interacts with transmembrane segments of nascent integral membrane proteins during membrane integration.

The protein resides in the cell inner membrane. In terms of biological role, required for the insertion and/or proper folding and/or complex formation of integral membrane proteins into the membrane. Involved in integration of membrane proteins that insert both dependently and independently of the Sec translocase complex, as well as at least some lipoproteins. Aids folding of multispanning membrane proteins. The protein is Membrane protein insertase YidC of Psychromonas ingrahamii (strain DSM 17664 / CCUG 51855 / 37).